The following is a 483-amino-acid chain: Regulatory protein ViaA (483 aa).

This sequence belongs to the ViaA family. As to quaternary structure, homodimer. Interacts with RavA.

The protein resides in the cytoplasm. In terms of biological role, component of the RavA-ViaA chaperone complex, which may act on the membrane to optimize the function of some of the respiratory chains. ViaA stimulates the ATPase activity of RavA. This chain is Regulatory protein ViaA, found in Escherichia coli O127:H6 (strain E2348/69 / EPEC).